The primary structure comprises 288 residues: ATP synthase gamma chain (288 aa).

Belongs to the ATPase gamma chain family. In terms of assembly, F-type ATPases have 2 components, CF(1) - the catalytic core - and CF(0) - the membrane proton channel. CF(1) has five subunits: alpha(3), beta(3), gamma(1), delta(1), epsilon(1). CF(0) has three main subunits: a, b and c.

The protein localises to the cell inner membrane. In terms of biological role, produces ATP from ADP in the presence of a proton gradient across the membrane. The gamma chain is believed to be important in regulating ATPase activity and the flow of protons through the CF(0) complex. The chain is ATP synthase gamma chain from Blochmanniella pennsylvanica (strain BPEN).